A 106-amino-acid polypeptide reads, in one-letter code: Thioredoxin-2 (106 aa).

Positions 2–106 (VYQIKDKADL…RLEDVIKANI (105 aa)) constitute a Thioredoxin domain. Active-site nucleophile residues include Cys32 and Cys35. Cys32 and Cys35 form a disulfide bridge.

The protein belongs to the thioredoxin family.

Functionally, participates in various redox reactions through the reversible oxidation of its active center dithiol to a disulfide and catalyzes dithiol-disulfide exchange reactions. As a reducing substrate of peroxiredoxin 1, thioredoxin 2 is preferred over thioredoxin 1. This Drosophila yakuba (Fruit fly) protein is Thioredoxin-2.